The primary structure comprises 186 residues: uncharacterized protein (186 aa).

The tract at residues 121–146 (TSPLLKKNKPSSDQDDTSKQSFDQDE) is disordered.

This sequence belongs to the chlamydial CPn_0422/CT_273/TC_0545 family.

This is an uncharacterized protein from Chlamydia muridarum (strain MoPn / Nigg).